Consider the following 689-residue polypeptide: Glycine--tRNA ligase beta subunit (689 aa).

This sequence belongs to the class-II aminoacyl-tRNA synthetase family. In terms of assembly, tetramer of two alpha and two beta subunits.

It localises to the cytoplasm. The catalysed reaction is tRNA(Gly) + glycine + ATP = glycyl-tRNA(Gly) + AMP + diphosphate. This Citrobacter koseri (strain ATCC BAA-895 / CDC 4225-83 / SGSC4696) protein is Glycine--tRNA ligase beta subunit.